The primary structure comprises 398 residues: Thyrotropin-releasing hormone receptor (398 aa).

Residues 1–28 (MENETGSELNQTQLQPRAVVALEYQVVT) are Extracellular-facing. 2 N-linked (GlcNAc...) asparagine glycosylation sites follow: Asn3 and Asn10. Residues 29 to 51 (ILLVLIICGLGIVGNIMVVLVVM) traverse the membrane as a helical segment. The Cytoplasmic segment spans residues 52–61 (RTKHMRTPTN). The chain crosses the membrane as a helical span at residues 62–83 (CYLVSLAVADLMVLVAAGLPNI). The Extracellular portion of the chain corresponds to 84–99 (TDSIYGSWVYGYVGCL). The cysteines at positions 98 and 179 are disulfide-linked. Residues 100–121 (CITYLQYLGINASSCSITAFTI) traverse the membrane as a helical segment. Residues 122–144 (ERYIAICHPIKAQFLCTFSRAKK) lie on the Cytoplasmic side of the membrane. The helical transmembrane segment at 145–168 (IIIFVWAFTSIYCMLWFFLLDLNI) threads the bilayer. Residues 169 to 193 (STYKDAIVVSCGYKISRNYYSPIYL) are Extracellular-facing. A helical transmembrane segment spans residues 194-215 (MDFGVFYVVPMILATVLYGFIA). The Cytoplasmic portion of the chain corresponds to 216-266 (RILFLSPIPSDPKENSNTWKNDSTHQNKNLNSKTSNRYFNSTVSSRKQVTK). Residues 267-288 (MLAVVVILFALLWMPYRTLVVV) form a helical membrane-spanning segment. At 289-296 (NSFLSSPF) the chain is on the extracellular side. A helical membrane pass occupies residues 297–319 (QENWFLLFCRICIYLNSAINPVI). Residues 320 to 398 (YNLMSQKFRA…LASEVTFSQS (79 aa)) are Cytoplasmic-facing.

The protein belongs to the G-protein coupled receptor 1 family.

Its subcellular location is the cell membrane. In terms of biological role, receptor for thyrotropin-releasing hormone (TRH). Upon ligand binding, this G-protein-coupled receptor triggers activation of the phosphatidylinositol (IP3)-calcium-protein kinase C (PKC) pathway. The protein is Thyrotropin-releasing hormone receptor (TRHR) of Ovis aries (Sheep).